The chain runs to 461 residues: V-type ATP synthase beta chain (461 aa).

This sequence belongs to the ATPase alpha/beta chains family.

Produces ATP from ADP in the presence of a proton gradient across the membrane. The V-type beta chain is a regulatory subunit. The chain is V-type ATP synthase beta chain from Clostridium botulinum (strain Langeland / NCTC 10281 / Type F).